The following is a 136-amino-acid chain: DNA-directed RNA polymerase subunit omega (136 aa).

Residues 79-107 form a disordered region; the sequence is EPEAETVPLLSSSPAAAAVAPQSSSDDAA. The segment covering 89–107 has biased composition (low complexity); sequence SSSPAAAAVAPQSSSDDAA.

Belongs to the RNA polymerase subunit omega family. The RNAP catalytic core consists of 2 alpha, 1 beta, 1 beta' and 1 omega subunit. When a sigma factor is associated with the core the holoenzyme is formed, which can initiate transcription.

The catalysed reaction is RNA(n) + a ribonucleoside 5'-triphosphate = RNA(n+1) + diphosphate. Functionally, promotes RNA polymerase assembly. Latches the N- and C-terminal regions of the beta' subunit thereby facilitating its interaction with the beta and alpha subunits. The polypeptide is DNA-directed RNA polymerase subunit omega (Methylobacterium radiotolerans (strain ATCC 27329 / DSM 1819 / JCM 2831 / NBRC 15690 / NCIMB 10815 / 0-1)).